The primary structure comprises 291 residues: Lipase (291 aa).

Residues methionine 1–alanine 17 form the signal peptide. Residues serine 18–arginine 22 constitute a propeptide that is removed on maturation. 3 disulfide bridges follow: cysteine 44–cysteine 290, cysteine 58–cysteine 63, and cysteine 126–cysteine 129. The active-site Nucleophile is serine 168. Residues aspartate 223 and histidine 280 each act as charge relay system in the active site.

Belongs to the AB hydrolase superfamily. Lipase family.

It catalyses the reaction a triacylglycerol + H2O = a diacylglycerol + a fatty acid + H(+). This is Lipase (LIP) from Thermomyces lanuginosus (Humicola lanuginosa).